We begin with the raw amino-acid sequence, 486 residues long: 6-phosphogluconate dehydrogenase, decarboxylating 2 (486 aa).

NADP(+) contacts are provided by residues 12–17 (GLAVMG), 35–37 (NRT), 79–81 (VKA), and N107. Substrate contacts are provided by residues N107 and 133 to 135 (SGG). Catalysis depends on K188, which acts as the Proton acceptor. Residue 191–192 (HN) coordinates substrate. Residue E195 is the Proton donor of the active site. Residues Y196, K266, R293, R456, and H462 each contribute to the substrate site. The short motif at 484 to 486 (SKI) is the Microbody targeting signal element.

Belongs to the 6-phosphogluconate dehydrogenase family. As to quaternary structure, forms homodimer. Forms heterodimers with PGD1 or PGD3.

It is found in the cytoplasm. The protein localises to the cytosol. The protein resides in the peroxisome. The enzyme catalyses 6-phospho-D-gluconate + NADP(+) = D-ribulose 5-phosphate + CO2 + NADPH. The protein operates within carbohydrate degradation; pentose phosphate pathway; D-ribulose 5-phosphate from D-glucose 6-phosphate (oxidative stage): step 3/3. Its function is as follows. Catalyzes the oxidative decarboxylation of 6-phosphogluconate to ribulose 5-phosphate and CO(2), with concomitant reduction of NADP to NADPH. Required for guided growth of the male gametophytes and interaction between the pollen tube and the ovule. This is 6-phosphogluconate dehydrogenase, decarboxylating 2 from Arabidopsis thaliana (Mouse-ear cress).